A 406-amino-acid chain; its full sequence is Probable 26S proteasome regulatory subunit 10B (406 aa).

Residue 191–198 participates in ATP binding; the sequence is GPPGTGKT.

It belongs to the AAA ATPase family.

Its subcellular location is the cytoplasm. The protein resides in the nucleus. Its function is as follows. The 26S proteasome is involved in the ATP-dependent degradation of ubiquitinated proteins. The regulatory (or ATPase) complex confers ATP dependency and substrate specificity to the 26S complex. The polypeptide is Probable 26S proteasome regulatory subunit 10B (rpt-4) (Caenorhabditis elegans).